The chain runs to 68 residues: Putative alpha-conotoxin Qc alphaL-1 (68 aa).

An N-terminal signal peptide occupies residues 1–21; sequence MGMRMMFTMFLLVVLATTVVS. A propeptide spanning residues 22–49 is cleaved from the precursor; it reads INLDHAFDGRNAAANNKATDLMARTVRR. Cysteines 51 and 64 form a disulfide.

It belongs to the conotoxin A superfamily. Expressed by the venom duct.

The protein localises to the secreted. Functionally, alpha-conotoxins act on postsynaptic membranes, they bind to the nicotinic acetylcholine receptors (nAChR) and thus inhibit them. The protein is Putative alpha-conotoxin Qc alphaL-1 of Conus quercinus (Oak cone).